Consider the following 466-residue polypeptide: Vimentin (466 aa).

Low complexity-rich tracts occupy residues 1–13 (MSTR…SYRR) and 20–31 (TASRPSSSRSYV). Positions 1–31 (MSTRTVSSSSYRRMFGGPGTASRPSSSRSYV) are disordered. An N-acetylserine modification is found at Ser-2. The segment at 2–95 (STRTVSSSSY…FSLADAINTE (94 aa)) is head. Ser-7 is subject to Phosphoserine; alternate. O-linked (GlcNAc) serine; alternate glycosylation is present at Ser-7. 3 positions are modified to phosphoserine: Ser-8, Ser-9, and Ser-10. Position 20 is a phosphothreonine (Thr-20). A phosphoserine mark is found at Ser-25 and Ser-26. Thr-33 is a glycosylation site (O-linked (GlcNAc) threonine). Ser-34 is a glycosylation site (O-linked (GlcNAc) serine; alternate). Phosphoserine; by PKC; alternate is present on Ser-34. Ser-39 carries the phosphoserine; by CaMK2, PKA, PKC and ROCK2 modification. Ser-42, Ser-47, Ser-49, and Ser-51 each carry phosphoserine. Phosphotyrosine is present on Tyr-53. Ser-55 bears the Phosphoserine mark. Ser-56 bears the Phosphoserine; by CDK5 and CDK1 mark. A Phosphotyrosine modification is found at Tyr-61. Position 66 is a phosphoserine (Ser-66). A Phosphoserine; by AURKB and ROCK2 modification is found at Ser-72. Ser-73 and Ser-87 each carry phosphoserine. A coil 1A region spans residues 96-131 (FKNTRTNEKVELQELNDRFANYIDKVRFLEQQNKIL). The stretch at 96-131 (FKNTRTNEKVELQELNDRFANYIDKVRFLEQQNKIL) forms a coiled coil. The IF rod domain occupies 103-411 (EKVELQELND…KLLEGEESRI (309 aa)). Residue Lys-104 forms a Glycyl lysine isopeptide (Lys-Gly) (interchain with G-Cter in SUMO2) linkage. Tyr-117 is modified (phosphotyrosine). Lys-120, Lys-129, and Lys-139 each carry N6-acetyllysine; alternate. N6-succinyllysine; alternate is present on residues Lys-120 and Lys-129. Residues Lys-120, Lys-129, and Lys-139 each participate in a glycyl lysine isopeptide (Lys-Gly) (interchain with G-Cter in SUMO2); alternate cross-link. The segment at 132 to 153 (LAELEQLKGQGKSRLGDLYEEE) is linker 1. Ser-144 carries the post-translational modification Phosphoserine. Residues 154-245 (MRELRRQVDQ…KLHDEEIQEL (92 aa)) are a coiled coil. Residues 154 to 245 (MRELRRQVDQ…KLHDEEIQEL (92 aa)) form a coil 1B region. Lys-168 is modified (N6-acetyllysine). Lys-188 is subject to N6-acetyllysine; alternate. N6-succinyllysine; alternate is present on Lys-188. Position 214 is a phosphoserine (Ser-214). An N6-acetyllysine; alternate modification is found at Lys-223. Lys-223 participates in a covalent cross-link: Glycyl lysine isopeptide (Lys-Gly) (interchain with G-Cter in SUMO2); alternate. Ser-226 carries the post-translational modification Phosphoserine. Lys-235 carries the post-translational modification N6-acetyllysine. Residues 246–268 (QAQIQEQHVQIDMDVSKPDLTAA) form a linker 12 region. Residue Lys-262 forms a Glycyl lysine isopeptide (Lys-Gly) (interchain with G-Cter in SUMO2) linkage. The interval 269 to 407 (LRDVRQQYES…ATYRKLLEGE (139 aa)) is coil 2. Lys-294 bears the N6-acetyllysine; alternate mark. At Lys-294 the chain carries N6-succinyllysine; alternate. Residue Lys-294 forms a Glycyl lysine isopeptide (Lys-Gly) (interchain with G-Cter in SUMO2); alternate linkage. Ser-299 is subject to Phosphoserine. The stretch at 303-407 (NRNNDALRQA…ATYRKLLEGE (105 aa)) forms a coiled coil. Lys-313 participates in a covalent cross-link: Glycyl lysine isopeptide (Lys-Gly) (interchain with G-Cter in SUMO2). A Phosphoserine modification is found at Ser-325. The short motif at 326-329 (LTCE) is the [IL]-x-C-x-x-[DE] motif element. Residue Lys-373 is modified to N6-acetyllysine; alternate. Lys-373 is covalently cross-linked (Glycyl lysine isopeptide (Lys-Gly) (interchain with G-Cter in SUMO2); alternate). The tract at residues 408–466 (ESRISLPLPNFSSLNLRETNLESLPLVDTHSKRTLLIKTVETRDGQVINETSQHHDDLE) is tail. Ser-409, Ser-412, Ser-419, and Ser-420 each carry phosphoserine. Thr-426 carries the phosphothreonine modification. Position 430 is a phosphoserine (Ser-430). At Thr-436 the chain carries Phosphothreonine. A Phosphoserine modification is found at Ser-438. A Glycyl lysine isopeptide (Lys-Gly) (interchain with G-Cter in SUMO2) cross-link involves residue Lys-439. The residue at position 445 (Lys-445) is an N6-acetyllysine; alternate. The residue at position 445 (Lys-445) is an N6-succinyllysine; alternate. A Glycyl lysine isopeptide (Lys-Gly) (interchain with G-Cter in SUMO2); alternate cross-link involves residue Lys-445. Lys-445 participates in a covalent cross-link: Glycyl lysine isopeptide (Lys-Gly) (interchain with G-Cter in SUMO1); alternate. A phosphothreonine mark is found at Thr-446 and Thr-458. At Ser-459 the chain carries Phosphoserine.

It belongs to the intermediate filament family. In terms of assembly, homomer assembled from elementary dimers. Identified in complexes that contain VIM, EZR, AHNAK, BFSP1, BFSP2, ANK2, PLEC, PRX and spectrin. Interacts with BCAS3. Interacts with LGSN. Interacts with SYNM. Interacts (via rod region) with PLEC (via CH 1 domain). Interacts with STK33. Interacts with LARP6. Interacts with RAB8B. Interacts with TOR1A; the interaction associates TOR1A with the cytoskeleton. Interacts with TOR1AIP1. Interacts with TOR1AIP1. Interacts with DIAPH1. Interacts with EPPK1; interaction is dependent of higher-order structure of intermediate filament. Interacts with the non-receptor tyrosine kinase SRMS; the interaction leads to phosphorylation of VIM. Interacts with NOD2. Interacts (via head region) with CORO1C. Interacts with HDGF. Interacts with PRKCE (via phorbol-ester/DAG-type 2 domain). Interacts with BFSP2. Interacts with PPL. Interacts with PKP1 and PKP2. Interacts with SCRIB (via PDZ domains); the interaction protects SCRIB from proteasomal degradation and facilitates SCRIB localization to intermediate filaments, the interaction is reduced by cell contact inhibition. In terms of processing, one of the most prominent phosphoproteins in various cells of mesenchymal origin. Phosphorylation is enhanced during cell division, at which time vimentin filaments are significantly reorganized. Phosphorylation by PKN1 inhibits the formation of filaments. Filament disassembly during mitosis is promoted by phosphorylation at Ser-55 as well as by nestin. Phosphorylated at Ser-56 by CDK5 during neutrophil secretion in the cytoplasm. Phosphorylated by STK33. Phosphorylated on tyrosine residues by SRMS. Post-translationally, S-nitrosylation is induced by interferon-gamma and oxidatively-modified low-densitity lipoprotein (LDL(ox)) possibly implicating the iNOS-S100A8/9 transnitrosylase complex.

The protein resides in the cytoplasm. The protein localises to the cytoskeleton. It localises to the nucleus matrix. Its subcellular location is the cell membrane. Vimentins are class-III intermediate filaments found in various non-epithelial cells, especially mesenchymal cells. Vimentin is attached to the nucleus, endoplasmic reticulum, and mitochondria, either laterally or terminally. Plays a role in cell directional movement, orientation, cell sheet organization and Golgi complex polarization at the cell migration front. Protects SCRIB from proteasomal degradation and facilitates its localization to intermediate filaments in a cell contact-mediated manner. Its function is as follows. Involved with LARP6 in the stabilization of type I collagen mRNAs for CO1A1 and CO1A2. In Sus scrofa (Pig), this protein is Vimentin (VIM).